We begin with the raw amino-acid sequence, 346 residues long: Phosphoribosylformylglycinamidine cyclo-ligase (346 aa).

Belongs to the AIR synthase family.

The protein localises to the cytoplasm. It carries out the reaction 2-formamido-N(1)-(5-O-phospho-beta-D-ribosyl)acetamidine + ATP = 5-amino-1-(5-phospho-beta-D-ribosyl)imidazole + ADP + phosphate + H(+). It participates in purine metabolism; IMP biosynthesis via de novo pathway; 5-amino-1-(5-phospho-D-ribosyl)imidazole from N(2)-formyl-N(1)-(5-phospho-D-ribosyl)glycinamide: step 2/2. In Polaromonas sp. (strain JS666 / ATCC BAA-500), this protein is Phosphoribosylformylglycinamidine cyclo-ligase.